The primary structure comprises 796 residues: MQDPPRRLSAVPFLSSFFEGRRHSASDPILRLQQGRRSSAAKVLSSSSLQVMVAMSSVSCAERNPTCPERKRNSGRPTPKYTKVGERLRHVIPGHVACSMACGGKACKYENAARWSEQEQAVKGIYSSWVTDNILAMARPSTEVLEKFCIIEQFRSHGIKSIINLQRPGEHASCGNPLEQESGFTYLPEAFMEAGIYFYNFGWKDYGVASLTTILDMVKVMTFALQEGKVAIHCHAGLGRTGVLIACYLVFATRMTADQAIIFVRAKRPNSIQTRGQLLCVREFTQFLIPLRNIFSCCDPKAHAVTLAQYLIRQRHLLHGYEARLLKHIPKIIHLVCKLLLDLAENRPVVTEVADIPGLSAEIEKTVSEMITRQLDKELLRHDSDASDSFTPTAVVMDFENQDVVLSSEQELDPLWKRRNVECLQPLAHLKRQLSYSDSDLKRAESLLEQGRTPWTVPAQALLCHNPRQQKHISRCYSPQSPQLDLNKETLVRNTFSFWNHTKFGVPEGLKDDGSLIFHRTSIPKEVQRSRTFSSGISDSYNPGEPVTPNSANIPKGPNSSQQKVYHCECESHGGCGPSSVAEDGETCRRPVDCGSSPKAQFLGNETQNSKYLSEVAAHMPLQSELSVEARRILAAKALANLNEIAEKEEVKKKVEMWQKELNSRDGAWERICGEKDPFILCSLMWSWVEQLKEPVITKEDMDMLVDRCADASEALFLLEKGQQQTILCVLHCIVSLQTIPADVEEAVLARAIKAFTKVNFDSENGPIVYNTLKKIFKRTLEEKRKMTKDNPEPGI.

Residues 126–297 form the Tyrosine-protein phosphatase domain; sequence YSSWVTDNIL…LIPLRNIFSC (172 aa). C234 acts as the Phosphocysteine intermediate in catalysis. Phosphoserine occurs at positions 435 and 437.

It belongs to the protein-tyrosine phosphatase family. Non-receptor class PTPDC1 subfamily.

Functionally, may play roles in cilia formation and/or maintenance. In Bos taurus (Bovine), this protein is Protein tyrosine phosphatase domain-containing protein 1 (PTPDC1).